Here is a 494-residue protein sequence, read N- to C-terminus: O-acetyltransferase ptmV (494 aa).

The tract at residues 181-203 (ESQQDSREKLRHSGGPPDPRFDH) is disordered.

The protein belongs to the fumigaclavine B O-acetyltransferase family. In terms of assembly, monomer.

Its pathway is secondary metabolite biosynthesis. O-acetyltransferase; part of the gene cluster that mediates the biosynthesis of the indole diterpenes penitrems. The geranylgeranyl diphosphate (GGPP) synthase ptmG catalyzes the first step in penitrem biosynthesis via conversion of farnesyl pyrophosphate and isopentyl pyrophosphate into geranylgeranyl pyrophosphate (GGPP). Condensation of indole-3-glycerol phosphate with GGPP by the prenyl transferase ptmC then forms 3-geranylgeranylindole (3-GGI). Epoxidation by the FAD-dependent monooxygenase ptmM leads to a epoxidized-GGI that is substrate of the terpene cyclase ptmB for cyclization to yield paspaline. Paspaline is subsequently converted to 13-desoxypaxilline by the cytochrome P450 monooxygenase ptmP, the latter being then converted to paxilline by the cytochrome P450 monooxygenase ptmQ. Paxilline is converted to beta-paxitriol via C-10 ketoreduction by the short-chain dehydrogenase ptmH which can be monoprenylated at the C-20 by the indole diterpene prenyltransferase ptmD. A two-step elimination (acetylation and elimination) process performed by the O-acetyltransferase ptmV and ptmI leads to the production of the prenylated form of penijanthine. The FAD-linked oxidoreductase ptmO then converts the prenylated form of penijanthine into PC-M5 which is in turn transformed into PC-M4 by the aromatic dimethylallyltransferase ptmE. Five sequential oxidative transformations performed by the cytochrome P450 monooxygenases ptmK, ptmU, ptmL, ptmN and ptmJ yield the various penitrem compounds. PtmK, ptmU and ptmM are involved in the formation of the key bicyclic ring of penitrem C via the formation of the intermediates secopenitrem D and penitrem D. PtmL catalyzes the epoxidation of penitrem D and C to yield penitrem B and F, respectively. PtmJ catalyzes the last benzylic hydroxylation to convert penitrem B to prenitrem E and penitrem F to penitrem A. The polypeptide is O-acetyltransferase ptmV (Penicillium ochrochloron).